Here is a 319-residue protein sequence, read N- to C-terminus: Ornithine carbamoyltransferase (319 aa).

Residues 63 to 66, Gln90, Arg114, and 141 to 144 contribute to the carbamoyl phosphate site; these read STRT and HPCQ. Residues Asn172, Asp236, and 240–241 each bind L-ornithine; that span reads SM. Residues 276–277 and Arg304 each bind carbamoyl phosphate; that span reads CL.

The protein belongs to the aspartate/ornithine carbamoyltransferase superfamily. OTCase family.

The protein localises to the cytoplasm. It carries out the reaction carbamoyl phosphate + L-ornithine = L-citrulline + phosphate + H(+). Its pathway is amino-acid biosynthesis; L-arginine biosynthesis; L-arginine from L-ornithine and carbamoyl phosphate: step 1/3. Functionally, reversibly catalyzes the transfer of the carbamoyl group from carbamoyl phosphate (CP) to the N(epsilon) atom of ornithine (ORN) to produce L-citrulline. The protein is Ornithine carbamoyltransferase of Halalkalibacterium halodurans (strain ATCC BAA-125 / DSM 18197 / FERM 7344 / JCM 9153 / C-125) (Bacillus halodurans).